An 878-amino-acid chain; its full sequence is Phosphoenolpyruvate carboxylase (878 aa).

Active-site residues include His-137 and Lys-545.

It belongs to the PEPCase type 1 family. Mg(2+) is required as a cofactor.

The catalysed reaction is oxaloacetate + phosphate = phosphoenolpyruvate + hydrogencarbonate. In terms of biological role, forms oxaloacetate, a four-carbon dicarboxylic acid source for the tricarboxylic acid cycle. The polypeptide is Phosphoenolpyruvate carboxylase (Photorhabdus laumondii subsp. laumondii (strain DSM 15139 / CIP 105565 / TT01) (Photorhabdus luminescens subsp. laumondii)).